Consider the following 248-residue polypeptide: Pyridoxine 5'-phosphate synthase (248 aa).

Asn9 provides a ligand contact to 3-amino-2-oxopropyl phosphate. Residue 11 to 12 (DH) coordinates 1-deoxy-D-xylulose 5-phosphate. Arg20 is a binding site for 3-amino-2-oxopropyl phosphate. The active-site Proton acceptor is the His45. 2 residues coordinate 1-deoxy-D-xylulose 5-phosphate: Arg47 and His52. The active-site Proton acceptor is Glu72. Residue Thr102 coordinates 1-deoxy-D-xylulose 5-phosphate. His193 acts as the Proton donor in catalysis. Residues Gly194 and 215–216 (GH) contribute to the 3-amino-2-oxopropyl phosphate site.

Belongs to the PNP synthase family. In terms of assembly, homooctamer; tetramer of dimers.

The protein resides in the cytoplasm. The enzyme catalyses 3-amino-2-oxopropyl phosphate + 1-deoxy-D-xylulose 5-phosphate = pyridoxine 5'-phosphate + phosphate + 2 H2O + H(+). It functions in the pathway cofactor biosynthesis; pyridoxine 5'-phosphate biosynthesis; pyridoxine 5'-phosphate from D-erythrose 4-phosphate: step 5/5. Its function is as follows. Catalyzes the complicated ring closure reaction between the two acyclic compounds 1-deoxy-D-xylulose-5-phosphate (DXP) and 3-amino-2-oxopropyl phosphate (1-amino-acetone-3-phosphate or AAP) to form pyridoxine 5'-phosphate (PNP) and inorganic phosphate. This is Pyridoxine 5'-phosphate synthase from Hydrogenovibrio crunogenus (strain DSM 25203 / XCL-2) (Thiomicrospira crunogena).